A 447-amino-acid chain; its full sequence is ATP synthase subunit beta (447 aa).

147 to 154 provides a ligand contact to ATP; the sequence is GGAGVGKT.

Belongs to the ATPase alpha/beta chains family. In terms of assembly, F-type ATPases have 2 components, CF(1) - the catalytic core - and CF(0) - the membrane proton channel. CF(1) has five subunits: alpha(3), beta(3), gamma(1), delta(1), epsilon(1). CF(0) has three main subunits: a(1), b(2) and c(9-12). The alpha and beta chains form an alternating ring which encloses part of the gamma chain. CF(1) is attached to CF(0) by a central stalk formed by the gamma and epsilon chains, while a peripheral stalk is formed by the delta and b chains.

The protein localises to the cell membrane. It catalyses the reaction ATP + H2O + 4 H(+)(in) = ADP + phosphate + 5 H(+)(out). Produces ATP from ADP in the presence of a proton gradient across the membrane. The catalytic sites are hosted primarily by the beta subunits. The sequence is that of ATP synthase subunit beta from Carsonella ruddii (strain PV).